The following is a 760-amino-acid chain: MSEVLPADSGVGTLAVFMASSGSTDIANRNSPATPPNTLNLRSSHNELLNAEIKHSDAKNSTPPKCRKKYALTNIQAAMGLSDPAVQPLLGNGSANIKLVKNGENQLRKAAEQGQQDPNKNLSPAAVINLTSEKLEVKDPHPQESSGCEILPSQPRRTKSFLNYYADLETSARELGQNLGPCQGVGEEKAQPGPGQAPVVIGNGDLLPQKPNKPQSSPEDGQVATVSSSPETKKDHPKTGAKTDCALHRIQNLAPSDEESSWTTLSQDSASPSSPDETDIWSDHSFQTDPDLPPGWKRVNDIAGTYYWHIPTGTTQWERPVSIPADLHGSRKGSLSSVTPSPTPENEKQPWSDFAVLNGGKINSDIWKDLHAATVNPDPSLKEFEGATLRYASLKLRNAPHGDDDDSCSINSDPEAKCFAVRSLGWVEMAEEDLAPGKSSVAVNNCIRQLSYCKNDIRDTVGIWGEGKDMYLSLENDMLSLVDPMDRSVLHSQPIVNIRVWGVGRDNGRERDFAYVARDKDTRILKCHVFRCDTPAKAIATSLHEICSKIMAERKNAKALACSSLQERTNMSLDVPLQVDFPTPKTELVQKFRVQYLGMLPVDRPVGMDTLNSAIENLMTSSSKEDWPSVNMNVADATVTVISEKNEEEVLVECRVRFLSFMGVGKDVHTFAFIMDTGNQRFECHVFWCEPNAANVSEAVQAACMLRYQKCLVARPPSQKVRPPPPPADSVTRRVTTNVKRGVLSLIDTLKQKRPVTETP.

2 positions are modified to phosphoserine: S123 and S160. 2 disordered regions span residues 177 to 295 (QNLG…LPPG) and 324 to 351 (PADL…KQPW). 2 stretches are compositionally biased toward polar residues: residues 212–230 (NKPQ…SSSP) and 261–275 (SWTT…PSSP). A WW domain is found at 290–322 (PDLPPGWKRVNDIAGTYYWHIPTGTTQWERPVS). Phosphoserine is present on residues S334, S409, and S412. 2 consecutive PID domains span residues 413–580 (DPEA…LQVD) and 586–738 (TELV…VTTN).

In terms of assembly, interacts (via C-terminus) with APP (via C-terminus). Interacts with APLP2 (via cytoplasmic domain). Expressed in the brain, retinal lens and muscle cells (at protein level).

The protein resides in the endoplasmic reticulum. Its subcellular location is the golgi apparatus. The protein localises to the early endosome. Functionally, plays a role in the maintenance of lens transparency, and may also play a role in muscle cell strength. Involved in hippocampal neurite branching and neuromuscular junction formation, as a result plays a role in spatial memory functioning. Activates transcription of APP. The chain is Amyloid beta precursor protein binding family B member 2 from Mus musculus (Mouse).